We begin with the raw amino-acid sequence, 408 residues long: Acetylornithine aminotransferase (408 aa).

Pyridoxal 5'-phosphate-binding positions include 107–108 and phenylalanine 141; that span reads GT. Arginine 144 contributes to the N(2)-acetyl-L-ornithine binding site. Residue 227–230 coordinates pyridoxal 5'-phosphate; that stretch reads DEIQ. Lysine 256 carries the post-translational modification N6-(pyridoxal phosphate)lysine. Threonine 284 is a binding site for N(2)-acetyl-L-ornithine. Threonine 285 serves as a coordination point for pyridoxal 5'-phosphate.

This sequence belongs to the class-III pyridoxal-phosphate-dependent aminotransferase family. ArgD subfamily. Homodimer. Pyridoxal 5'-phosphate is required as a cofactor.

The protein localises to the cytoplasm. It catalyses the reaction N(2)-acetyl-L-ornithine + 2-oxoglutarate = N-acetyl-L-glutamate 5-semialdehyde + L-glutamate. Its pathway is amino-acid biosynthesis; L-arginine biosynthesis; N(2)-acetyl-L-ornithine from L-glutamate: step 4/4. This chain is Acetylornithine aminotransferase, found in Xanthomonas campestris pv. campestris (strain ATCC 33913 / DSM 3586 / NCPPB 528 / LMG 568 / P 25).